We begin with the raw amino-acid sequence, 155 residues long: Large ribosomal subunit protein eL24 (155 aa).

Residues 92 to 155 are disordered; the sequence is AKRNMKPEVR…KAAPRVGGKR (64 aa). Over residues 96 to 117 the composition is skewed to basic and acidic residues; the sequence is MKPEVRKAQREQAIKQAKEQKK. Over residues 124–133 the composition is skewed to low complexity; the sequence is KTTAPPTKGK.

It belongs to the eukaryotic ribosomal protein eL24 family.

The sequence is that of Large ribosomal subunit protein eL24 (RpL24) from Plutella xylostella (Diamondback moth).